Consider the following 44-residue polypeptide: MIILLDLNGTIATDGKIKEGVKERLTILKERAEIYILSADTSEL.

This is an uncharacterized protein from Methanocaldococcus jannaschii (strain ATCC 43067 / DSM 2661 / JAL-1 / JCM 10045 / NBRC 100440) (Methanococcus jannaschii).